The sequence spans 189 residues: GTPase HRas (189 aa).

10–17 (GARGVGKS) is a binding site for GTP. The Effector region motif lies at 32 to 40 (YDPTIEDSY). GTP contacts are provided by residues 57–61 (DTAGQ) and 116–119 (NKCD). Residues cysteine 181 and cysteine 184 are each lipidated (S-palmitoyl cysteine; by host). Cysteine methyl ester; by host is present on cysteine 186. The S-farnesyl cysteine; by host moiety is linked to residue cysteine 186. A propeptide spans 187-189 (VLS) (removed in mature form).

This sequence belongs to the small GTPase superfamily. Ras family.

It localises to the host cell membrane. It catalyses the reaction GTP + H2O = GDP + phosphate + H(+). With respect to regulation, alternates between an inactive form bound to GDP and an active form bound to GTP. Activated by a guanine nucleotide-exchange factor (GEF) and inactivated by a GTPase-activating protein (GAP). The protein is GTPase HRas (H-RAS) of Mus musculus (Mouse).